A 195-amino-acid polypeptide reads, in one-letter code: Molybdenum cofactor guanylyltransferase (195 aa).

GTP-binding positions include Leu-10–Gly-12, Lys-23, Asn-51, Asp-69, and Asp-99. Mg(2+) is bound at residue Asp-99.

This sequence belongs to the MobA family. As to quaternary structure, monomer. Mg(2+) serves as cofactor.

It is found in the cytoplasm. The enzyme catalyses Mo-molybdopterin + GTP + H(+) = Mo-molybdopterin guanine dinucleotide + diphosphate. In terms of biological role, transfers a GMP moiety from GTP to Mo-molybdopterin (Mo-MPT) cofactor (Moco or molybdenum cofactor) to form Mo-molybdopterin guanine dinucleotide (Mo-MGD) cofactor. The sequence is that of Molybdenum cofactor guanylyltransferase from Histophilus somni (strain 2336) (Haemophilus somnus).